Here is a 253-residue protein sequence, read N- to C-terminus: MTQEKKDFTIHALPVLKDNIIWIWEASGQAVVVDPAVSEPVKEFLSQNNLALNSVLQTHHHDDHIGGTRDLISNWPSASIIACKTDLERIPFQTHSVTDQEVFTLFGYSVKVLEVPGHTRGHVAYYLSDTNADNRNPALFCGDTLFAGGCGRLFEGTPHEMFKSLKLLNSLPSNTKIYCAHEYTESNLHWANHLYPEDLLIKKRLEYVSSQRANGLLSLPSTIAEERKTNLFFRARTLEQFSQFRKHKDNWMS.

His-59, His-61, Asp-63, His-64, His-118, Asp-143, and His-181 together coordinate Zn(2+).

Belongs to the metallo-beta-lactamase superfamily. Glyoxalase II family. Monomer. Requires Zn(2+) as cofactor.

The enzyme catalyses an S-(2-hydroxyacyl)glutathione + H2O = a 2-hydroxy carboxylate + glutathione + H(+). It functions in the pathway secondary metabolite metabolism; methylglyoxal degradation; (R)-lactate from methylglyoxal: step 2/2. Functionally, thiolesterase that catalyzes the hydrolysis of S-D-lactoyl-glutathione to form glutathione and D-lactic acid. The chain is Hydroxyacylglutathione hydrolase from Prochlorococcus marinus (strain MIT 9211).